We begin with the raw amino-acid sequence, 622 residues long: Chaperone protein HscA homolog (622 aa).

It belongs to the heat shock protein 70 family.

Its function is as follows. Chaperone involved in the maturation of iron-sulfur cluster-containing proteins. Has a low intrinsic ATPase activity which is markedly stimulated by HscB. The polypeptide is Chaperone protein HscA homolog (Burkholderia lata (strain ATCC 17760 / DSM 23089 / LMG 22485 / NCIMB 9086 / R18194 / 383)).